We begin with the raw amino-acid sequence, 113 residues long: Transcriptional regulator RamA (113 aa).

An HTH araC/xylS-type domain is found at Asp-9 to Glu-107. DNA-binding regions (H-T-H motif) lie at residues Asp-26 to Lys-47 and Val-74 to Phe-97.

As to quaternary structure, monomer. Interacts with the C-terminus of RNAP subunit RpoA when part of class I or class II promoter complexes. Also interacts with sigma-70/RpoD in class II promoter complexes.

In terms of biological role, transcriptional regulator. Binds to regulatory regions of target genes, including its own gene, efflux pump operon acrAB, antisense RNA gene micF, and various genes involved in lipid A biosynthesis, including lpxO and lpxL-2. Regulates expression of many genes, perhaps including its own; activates various lipid A biosynthetic genes, and as a result of activating acrAB, confers multidrug resistance. Plays a role in virulence and survival in host cells. The sequence is that of Transcriptional regulator RamA from Klebsiella pneumoniae subsp. pneumoniae (strain HS11286).